Here is a 338-residue protein sequence, read N- to C-terminus: Malate dehydrogenase, mitochondrial (338 aa).

Residues 1–24 constitute a mitochondrion transit peptide; the sequence is MLSALARPAGAALRRSFSTSAQNN. Residues 31-37 and D57 each bind NAD(+); that span reads GASGGIG. An O-linked (GlcNAc) serine glycan is attached at S33. Residues K78 and K91 each carry the N6-acetyllysine; alternate modification. An N6-succinyllysine; alternate mark is found at K78 and K91. R104 and R110 together coordinate substrate. NAD(+)-binding positions include N117 and 140–142; that span reads IAN. N142 is a substrate binding site. N6-acetyllysine is present on K165. R176 provides a ligand contact to substrate. Residue K185 is modified to N6-acetyllysine; alternate. K185 is subject to N6-succinyllysine; alternate. H200 serves as the catalytic Proton acceptor. N6-succinyllysine is present on K203. N6-acetyllysine; alternate occurs at positions 215 and 239. 2 positions are modified to N6-succinyllysine; alternate: K215 and K239. K239 is subject to N6-malonyllysine; alternate. S246 bears the Phosphoserine mark. M251 serves as a coordination point for NAD(+). K269 is subject to N6-succinyllysine. An N6-acetyllysine; alternate mark is found at K296, K301, and K307. N6-succinyllysine; alternate is present on residues K296, K301, and K307. K307 bears the N6-malonyllysine; alternate mark. Phosphothreonine is present on T309. N6-acetyllysine; alternate is present on residues K314 and K324. Residues K314 and K324 each carry the N6-succinyllysine; alternate modification. S326 is subject to Phosphoserine. K328, K329, and K335 each carry N6-acetyllysine; alternate. At K328 the chain carries N6-succinyllysine; alternate. The residue at position 329 (K329) is an N6-malonyllysine; alternate. K335 bears the N6-succinyllysine; alternate mark.

This sequence belongs to the LDH/MDH superfamily. MDH type 1 family. In terms of assembly, homodimer. Post-translationally, acetylation is enhanced after treatment either with trichostin A (TCA) or with nicotinamide (NAM) with the appearance of tri- and tetraacetylations. Glucose also increases acetylation. Acetylation of Lys-239 and Lys-314 is observed in liver mitochondria from fasted mice but not from fed mice.

It is found in the mitochondrion matrix. The enzyme catalyses (S)-malate + NAD(+) = oxaloacetate + NADH + H(+). Its activity is regulated as follows. Enzyme activity is enhanced by acetylation. This Mus musculus (Mouse) protein is Malate dehydrogenase, mitochondrial (Mdh2).